Here is a 240-residue protein sequence, read N- to C-terminus: MADKKEPAPGWPILKGEYEVGDVKNCVLVITCGSHLPGQPILDAGAAVTGSCKTENLGIEKVVAHIISNPNIRYLLVTGSEVKGHITGQSVMSLHANGVKDNRISGALGAIPYVENLNEDAIARFQEQVDVVNLLDTEDMGAITSKVKELASKDPGAFDAEPMIVEISEEGEEEEEGGAVRPVSGEIAVIRSRLKAIEARMMDIGNLNKFHSGVHAGKIEGAMIGLTVTISLLGLLLLGR.

Over 1–218 the chain is Cytoplasmic; sequence MADKKEPAPG…KFHSGVHAGK (218 aa). Position 85 (histidine 85) interacts with 5-hydroxybenzimidazolylcob(I)amide. A helical transmembrane segment spans residues 219 to 239; it reads IEGAMIGLTVTISLLGLLLLG. A topological domain (extracellular) is located at residue arginine 240.

Belongs to the MtrA family. In terms of assembly, the complex is composed of 8 subunits; MtrA, MtrB, MtrC, MtrD, MtrE, MtrF, MtrG and MtrH. 5-hydroxybenzimidazolylcob(I)amide serves as cofactor.

It is found in the cell membrane. The catalysed reaction is 5-methyl-5,6,7,8-tetrahydromethanopterin + coenzyme M + 2 Na(+)(in) = 5,6,7,8-tetrahydromethanopterin + methyl-coenzyme M + 2 Na(+)(out). The protein operates within one-carbon metabolism; methanogenesis from CO(2); methyl-coenzyme M from 5,10-methylene-5,6,7,8-tetrahydromethanopterin: step 2/2. In terms of biological role, part of a complex that catalyzes the formation of methyl-coenzyme M and tetrahydromethanopterin from coenzyme M and methyl-tetrahydromethanopterin. This is an energy-conserving, sodium-ion translocating step. This Methanosarcina barkeri (strain Fusaro / DSM 804) protein is Tetrahydromethanopterin S-methyltransferase subunit A.